We begin with the raw amino-acid sequence, 279 residues long: Topoisomerase I damage affected protein 4 (279 aa).

Topologically, residues 1 to 32 are extracellular; the sequence is MNANSTTTAIGLTSPFEKLSFFPHSSNLILAH. A helical transmembrane segment spans residues 33–53; sequence LHEIIFSFVFYQLAFSVVAPF. At 54 to 79 the chain is on the cytoplasmic side; it reads LNKVVFRKHYTTIRDPLLKIDFNVHT. The 202-residue stretch at 70–271 folds into the TLC domain; the sequence is LLKIDFNVHT…MIRIAKKLAK (202 aa). A helical membrane pass occupies residues 80-100; that stretch reads VSMIQAVVSNTVLLPTLTTPM. At 101-110 the chain is on the extracellular side; it reads HYNVVTYTDS. The chain crosses the membrane as a helical span at residues 111–131; that stretch reads YSSMVSSLSAGYFIWDLTMCV. The Cytoplasmic portion of the chain corresponds to 132 to 135; that stretch reads RYFK. Residues 136–156 form a helical membrane-spanning segment; it reads LYGLEFTGHAIGSVYVMLLSL. At 157 to 162 the chain is on the extracellular side; sequence RPFCQP. The chain crosses the membrane as a helical span at residues 163-183; that stretch reads WIGRFLIYEASTPFVNINWFI. Residues 184–192 lie on the Cytoplasmic side of the membrane; it reads MQCNAKSKN. Residues 193–213 form a helical membrane-spanning segment; that stretch reads SIPLWFNVVNGLLLMTVFFVV. Topologically, residues 214–238 are extracellular; the sequence is RICWGSIASALLFRQMWKVRDELPK. Residues 239–259 form a helical membrane-spanning segment; that stretch reads FSAVTMMSLNIFMNLLNVLWF. Topologically, residues 260–279 are cytoplasmic; sequence KKMIRIAKKLAKPAPTSKLD.

The protein belongs to the TMEM56 family.

Its subcellular location is the membrane. The chain is Topoisomerase I damage affected protein 4 (TDA4) from Saccharomyces cerevisiae (strain ATCC 204508 / S288c) (Baker's yeast).